A 382-amino-acid polypeptide reads, in one-letter code: 1-deoxy-D-xylulose 5-phosphate reductoisomerase (382 aa).

Residues threonine 11, glycine 12, serine 13, isoleucine 14, and asparagine 123 each contribute to the NADPH site. Lysine 124 lines the 1-deoxy-D-xylulose 5-phosphate pocket. Glutamate 125 is a binding site for NADPH. Aspartate 149 lines the Mn(2+) pocket. Residues serine 150, glutamate 151, serine 173, and histidine 196 each coordinate 1-deoxy-D-xylulose 5-phosphate. Residue glutamate 151 coordinates Mn(2+). Glycine 202 is an NADPH binding site. Residues serine 209, asparagine 214, lysine 215, and glutamate 218 each contribute to the 1-deoxy-D-xylulose 5-phosphate site. Glutamate 218 is a Mn(2+) binding site.

This sequence belongs to the DXR family. The cofactor is Mg(2+). Requires Mn(2+) as cofactor.

The enzyme catalyses 2-C-methyl-D-erythritol 4-phosphate + NADP(+) = 1-deoxy-D-xylulose 5-phosphate + NADPH + H(+). Its pathway is isoprenoid biosynthesis; isopentenyl diphosphate biosynthesis via DXP pathway; isopentenyl diphosphate from 1-deoxy-D-xylulose 5-phosphate: step 1/6. Its function is as follows. Catalyzes the NADPH-dependent rearrangement and reduction of 1-deoxy-D-xylulose-5-phosphate (DXP) to 2-C-methyl-D-erythritol 4-phosphate (MEP). The chain is 1-deoxy-D-xylulose 5-phosphate reductoisomerase from Phocaeicola vulgatus (strain ATCC 8482 / DSM 1447 / JCM 5826 / CCUG 4940 / NBRC 14291 / NCTC 11154) (Bacteroides vulgatus).